A 541-amino-acid polypeptide reads, in one-letter code: Membrane protein insertase YidC (541 aa).

Transmembrane regions (helical) follow at residues asparagine 6–aspartate 26, phenylalanine 349–phenylalanine 369, glycine 420–leucine 440, leucine 457–methionine 477, and methionine 500–glycine 520.

Belongs to the OXA1/ALB3/YidC family. Type 1 subfamily. Interacts with the Sec translocase complex via SecD. Specifically interacts with transmembrane segments of nascent integral membrane proteins during membrane integration.

The protein resides in the cell inner membrane. Its function is as follows. Required for the insertion and/or proper folding and/or complex formation of integral membrane proteins into the membrane. Involved in integration of membrane proteins that insert both dependently and independently of the Sec translocase complex, as well as at least some lipoproteins. Aids folding of multispanning membrane proteins. The polypeptide is Membrane protein insertase YidC (Shewanella sp. (strain ANA-3)).